We begin with the raw amino-acid sequence, 605 residues long: Copper resistance protein A (605 aa).

The segment at residues 1–41 is a signal peptide (tat-type signal); the sequence is MLLKTSRRTFLKGLTLSGVAGSLGVWSFNARSSLSLPVAAS. 4 residues coordinate Cu cation: H100, H102, H142, and H144. 3 repeat units span residues 382–389, 414–421, and 422–429. Residues 382–429 are 3 X 8 AA tandem repeats of D-H-X-X-M-X-G-M; it reads DHSQMGGMDNSGEMMSMDGADLPDSGTSSAPMDHSSMAGMDHSRMAGM. Residues H538, H541, H543, H586, C587, H588, H592, and M597 each contribute to the Cu cation site.

It belongs to the multicopper oxidase family. CopA subfamily. Post-translationally, predicted to be exported by the Tat system. The position of the signal peptide cleavage has not been experimentally proven.

It localises to the periplasm. In terms of biological role, required for the copper-inducible expression of copper resistance. May have oxidase activity. This is Copper resistance protein A (pcoA) from Escherichia coli.